The sequence spans 930 residues: RNA-binding protein 10 (930 aa).

2 stretches are compositionally biased toward basic and acidic residues: residues 1 to 14 and 21 to 45; these read MEYE…DRTG and RSQD…RSYP. A disordered region spans residues 1–127; that stretch reads MEYERRGGRG…EEDEEEEEKA (127 aa). Glutamate 2 is modified (N-acetylserine). Phosphoserine is present on residues arginine 30, serine 61, and serine 89. The segment covering 59 to 70 has biased composition (acidic residues); the sequence is DSSEEQSAEDSY. A compositionally biased stretch (basic residues) spans 80–89; the sequence is RRRRRRHRHS. The span at 98–111 shows a compositional bias: basic and acidic residues; it reads RDGDYRDQDYRTEQ. Residues 112 to 125 are compositionally biased toward acidic residues; it reads GEEEEEEEDEEEEE. The RRM 1 domain maps to 129–209; the sequence is NIVMLRMLPQ…QKVSMHYSDP (81 aa). A RanBP2-type zinc finger spans residues 212–242; sequence KINEDWLCNKCGVQNFKRREKCFKCGVPKSE. The 85-residue stretch at 300 to 384 folds into the RRM 2 domain; that stretch reads DTIILRNLNP…KTINVEFAKG (85 aa). At lysine 383 the chain carries N6-acetyllysine. Disordered stretches follow at residues 466-524, 537-569, 620-685, and 700-753; these read PGIT…AANS, SELQ…VPDV, EQSA…DERR, and KGAL…EEKL. Polar residues predominate over residues 508–524; the sequence is YQQSAEASSSQGTAANS. Residues 541–557 are compositionally biased toward low complexity; the sequence is SPTHPSSALPPATSPTA. 3 stretches are compositionally biased toward basic and acidic residues: residues 623–639, 653–669, and 700–709; these read ADGH…GKEK, KDME…KENF, and KGALAERQHT. Phosphoserine occurs at positions 718, 723, 733, 736, and 738. Over residues 743 to 753 the composition is skewed to basic and acidic residues; it reads ERGGPEREEKL. The C2H2-type; atypical zinc finger occupies 759–784; it reads LACLLCRRQFPSKEALIRHQQLSGLH. 2 positions are modified to phosphoserine: serine 781 and serine 797. A compositionally biased stretch (basic and acidic residues) spans 815 to 826; it reads RDRAAERREKYG. Residues 815–861 are disordered; the sequence is RDRAAERREKYGIPEPPEPKRRKYGGISTASVDFEQPTRDGLGSDNI. Serine 845 carries the phosphoserine modification. Positions 858–904 constitute a G-patch domain; the sequence is SDNIGSRMLQAMGWKEGSGLGRKKQGIVTPIEAQTRVRGSGLGARGS. An Omega-N-methylarginine modification is found at arginine 902.

In terms of assembly, associates with the spliceosome. Component of a large chromatin remodeling complex, at least composed of MYSM1, PCAF, RBM10 and KIF11/TRIP5.

The protein resides in the nucleus. Its function is as follows. Binds to ssRNA containing the consensus sequence 5'-AGGUAA-3'. May be involved in post-transcriptional processing, most probably in mRNA splicing. Binds to RNA homopolymers, with a preference for poly(G) and poly(U) and little for poly(A). May bind to specific miRNA hairpins. This Homo sapiens (Human) protein is RNA-binding protein 10.